The following is an 839-amino-acid chain: MLKQISTTTKKEPWVNLSLLMVHNSFLDINYFWTTNLSIHKYGNYLVNNLNKAQWNTLSSVLQLKKAPHSGFLWTDQHNYIPLHRVKTNLCEKIELAAVQQSHPFHQTIHDFLRQSTCPKKRQRLIEKLQIPNELRWFLGFNALKKLSQFVVFELDNTNKLTSETLSQFFTTKFVNKVYFNQIQFEYNNFVGLLEDHERDLVEFSTHFFNSFFEQPDHLTKSFFEQYYALTRQRERLLHNLKVQSYETKHGVNTYFENLQITRAQQQANQLKRAFKKQQRNSVQLINRFMSSLWWSQTKIKFKSIFNFYKTRILEKRIVAKRIQIKIWLLKELKQMRLLNPDLLVSTIAESERLVEQLMSNIQRLYQQILQLKPGQSLNWKYQAISFELEKLTKPIVLTHDAVIGFLIKSRLAFLQEYAKGLNRCEQHNKLVNELKQNVLLNQNQYKGEVSQSYSVVNQKAVFKGFIQTVKAALNYTKLKHTLDPFNLMNIVQERCFEQLLTTYEKLDWTKYELNQLYFVCRALWTNLHKQTQHFFTKYQFITHGVVDFVFNQGRNQTQFASLKANLNRDWNSPKWKLLVNKTVNKYFEANLHHPQAYLLLPNRNATTLTEANTTTINQLNLKTQLKQWRAHYHLLLQDIRLIQWLYKKEIKQKQQQIKALLKNYGTLNKLLNTQISKVNNVVRKTFFVDSEECDLNRLQASNKLHFNLLNAMVNVISFCLKKCRQNPKKLNRTANLKMLLDNTFKNGIPSWMIFSDLNKINTKQRFKLYLLFKLLLHPQLVLVDSFVNFNKHTYNFTRGLLIAHQNQQGIAYLFNDPHNNLVKDFFTQTINFETRAKN.

This is an uncharacterized protein from Mycoplasma pneumoniae (strain ATCC 29342 / M129 / Subtype 1) (Mycoplasmoides pneumoniae).